The chain runs to 428 residues: Tryptophan synthase beta chain (428 aa).

Lys-100 is modified (N6-(pyridoxal phosphate)lysine).

It belongs to the TrpB family. In terms of assembly, tetramer of two alpha and two beta chains. Pyridoxal 5'-phosphate is required as a cofactor.

It catalyses the reaction (1S,2R)-1-C-(indol-3-yl)glycerol 3-phosphate + L-serine = D-glyceraldehyde 3-phosphate + L-tryptophan + H2O. It participates in amino-acid biosynthesis; L-tryptophan biosynthesis; L-tryptophan from chorismate: step 5/5. Functionally, the beta subunit is responsible for the synthesis of L-tryptophan from indole and L-serine. This Streptomyces griseus subsp. griseus (strain JCM 4626 / CBS 651.72 / NBRC 13350 / KCC S-0626 / ISP 5235) protein is Tryptophan synthase beta chain.